The primary structure comprises 1192 residues: Plakophilin-4 (1192 aa).

Positions 1 to 31 (MPAPEQASLVEEGQPQTRQEAASTGPGMEPE) are disordered. The stretch at 36–70 (TILASVKEQELQFQRLTRELEVERQIVASQLERCR) forms a coiled coil. Residues 73-262 (AESPSIASTS…PRPLNPSAYS (190 aa)) are disordered. S75 bears the Phosphoserine mark. A compositionally biased stretch (polar residues) spans 77–86 (SIASTSSTEK). Residue T84 is modified to Phosphothreonine. S106, S132, S136, and S139 each carry phosphoserine. Composition is skewed to polar residues over residues 138 to 156 (GSLG…SDSG), 163 to 204 (FHNS…QPSV), and 214 to 230 (SVPS…STGV). Phosphoserine occurs at positions 221, 231, and 236. Over residues 231–242 (SPSRGSLRTSLG) the composition is skewed to low complexity. Omega-N-methylarginine is present on residues R254 and R270. Residues S273 and S281 each carry the phosphoserine modification. Residues 290-310 (SVTSRQTSNPNGPTPQYQTTA) form a disordered region. A phosphoserine mark is found at S314, S327, and S337. The interval 323 to 348 (TRVASPSQGQVGSSSPKRSGMTAVPQ) is disordered. A compositionally biased stretch (low complexity) spans 325 to 338 (VASPSQGQVGSSSP). Y372 carries the phosphotyrosine modification. Phosphoserine is present on residues S392, S403, and S406. The residue at position 412 (T412) is a Phosphothreonine. Y415 carries the phosphotyrosine modification. Residues 415–455 (YEGRTYYSPVYRSPNHGTVELQGSQTALYRTGSVGIGNLQR) form an ARM 1 repeat. Residues S422, S427, and S438 each carry the phosphoserine modification. Y478 bears the Phosphotyrosine mark. 3 positions are modified to phosphoserine: S510, S512, and S515. ARM repeat units lie at residues 518-557 (KDPR…HLCF), 560-599 (NKVK…NLVF), 604-644 (DENK…NLSS), 660-702 (LTNT…NLSS), and 706-751 (EARK…NLSY). Residues 773–782 (GKESPSKDSE) are compositionally biased toward basic and acidic residues. Residues 773–810 (GKESPSKDSEPSCWGKKKKKKKRTPQEDQWDGVGPIPG) form a disordered region. Phosphoserine is present on S776. 3 ARM repeats span residues 815–855 (PKGV…NLSA), 862–901 (AYIR…NMAL), and 950–993 (MENA…TLWQ). Phosphothreonine is present on residues T1013 and T1017. A Phosphoserine modification is found at S1045. The tract at residues 1058 to 1086 (PRSEYDRTQPPMQYYNSQGDATHKGLYPG) is disordered. Over residues 1067–1077 (PPMQYYNSQGD) the composition is skewed to polar residues. 3 positions are modified to phosphoserine: S1091, S1100, and S1135.

This sequence belongs to the beta-catenin family. Interacts with PDZD2. Interacts (via the C-terminus) with FRMPD2 (via the PDZ 2 domain). Interacts with RHOA; the interaction is detected at the midbody. Interacts with ECT2; the interaction is detected at the midbody. Interacts with CCDC85B. Expressed in salivary glands (at protein level). Expressed in arrector pili muscle (at protein level).

It is found in the cell junction. The protein resides in the desmosome. The protein localises to the cytoplasm. Its subcellular location is the cytoskeleton. It localises to the spindle. It is found in the midbody. The protein resides in the cell membrane. Plays a role as a regulator of Rho activity during cytokinesis. May play a role in junctional plaques. This is Plakophilin-4 (PKP4) from Homo sapiens (Human).